Consider the following 195-residue polypeptide: Putative lysine exporter (195 aa).

6 consecutive transmembrane segments (helical) span residues 4-24 (LLSA…WLHF), 30-50 (LYVL…NGIS), 61-81 (LMMG…SAFF), 86-106 (ITQG…SVVL), 117-137 (IAFF…PLFM), and 170-190 (PIAI…LVFF).

This sequence belongs to the LysO family.

The protein localises to the cell inner membrane. Functionally, mediates export of lysine. This chain is Putative lysine exporter, found in Haemophilus influenzae (strain ATCC 51907 / DSM 11121 / KW20 / Rd).